The sequence spans 344 residues: L-rhamnose-proton symporter (344 aa).

The next 10 helical transmembrane spans lie at A4 to A24, W38 to L58, F68 to I88, M101 to I121, T137 to L157, L175 to A195, L214 to I234, I259 to G279, M290 to L310, and V321 to G341.

This sequence belongs to the L-rhamnose transporter (TC 2.A.7.6) family.

It is found in the cell inner membrane. The catalysed reaction is L-rhamnopyranose(in) + H(+)(in) = L-rhamnopyranose(out) + H(+)(out). In terms of biological role, uptake of L-rhamnose across the cytoplasmic membrane with the concomitant transport of protons into the cell (symport system). The protein is L-rhamnose-proton symporter of Salmonella gallinarum (strain 287/91 / NCTC 13346).